A 298-amino-acid polypeptide reads, in one-letter code: Dioxygenase aneA (298 aa).

Residues His-134, Asp-136, and His-213 each coordinate Fe cation.

It belongs to the PhyH family. In terms of assembly, homodimer. Fe cation is required as a cofactor.

The catalysed reaction is aculene D + 2-oxoglutarate + O2 = aculene C + succinate + CO2 + H2O. It carries out the reaction aculene B + 2-oxoglutarate + O2 = aculene A + succinate + CO2 + H2O. It participates in secondary metabolite biosynthesis. Functionally, dioxygenase; part of the gene cluster that mediates the biosynthesis of aculenes, a unique type of norsesquiterpenes that contain a nordaucane skeleton linked to an L-proline moiety and are of mixed biosynthetic origin. The pathway begins with the synthesis of dauca-4,7-diene by the terpene cyclase aneC using farnesyl pyrophosphate (FPP) as substrate. The cytochrome P450 monooxygenase aneF then performs the initial oxidation at C-12 of dauca-4,7-diene to yield asperaculane D. Asperaculane D is substrate of the cytochrome P450 monooxygenase aneD for C-10 hydroxylation to yield asperaculane E. The cytochrome P450 monooxygenase aneG then converts asperaculane E into aculene D via C-2 oxidation. The monomodular nonribosomal peptide synthase aneB adenylates L-proline and the thiohydrolase aneE transfers this activated L-proline derivative to aculenes D and C to produce respectively aculenes B and A. The dioxygenase aneA converts aculene D into aculene C, and aculene B into aculene A by introducing the 5,6-alkene moiety. Asperculanes A, B, C and F, as well as 14-prolyl asperculane C, might be shunt products of the pathway. In Aspergillus aculeatus (strain ATCC 16872 / CBS 172.66 / WB 5094), this protein is Dioxygenase aneA.